We begin with the raw amino-acid sequence, 122 residues long: Large ribosomal subunit protein uL14 (122 aa).

This sequence belongs to the universal ribosomal protein uL14 family. In terms of assembly, part of the 50S ribosomal subunit. Forms a cluster with proteins L3 and L19. In the 70S ribosome, L14 and L19 interact and together make contacts with the 16S rRNA in bridges B5 and B8.

In terms of biological role, binds to 23S rRNA. Forms part of two intersubunit bridges in the 70S ribosome. This Bifidobacterium animalis subsp. lactis (strain AD011) protein is Large ribosomal subunit protein uL14.